Consider the following 199-residue polypeptide: Peptidyl-tRNA hydrolase (199 aa).

Position 15 (tyrosine 15) interacts with tRNA. The active-site Proton acceptor is histidine 20. TRNA contacts are provided by tyrosine 66, asparagine 68, and asparagine 114.

Belongs to the PTH family. Monomer.

It is found in the cytoplasm. It carries out the reaction an N-acyl-L-alpha-aminoacyl-tRNA + H2O = an N-acyl-L-amino acid + a tRNA + H(+). In terms of biological role, hydrolyzes ribosome-free peptidyl-tRNAs (with 1 or more amino acids incorporated), which drop off the ribosome during protein synthesis, or as a result of ribosome stalling. Its function is as follows. Catalyzes the release of premature peptidyl moieties from peptidyl-tRNA molecules trapped in stalled 50S ribosomal subunits, and thus maintains levels of free tRNAs and 50S ribosomes. This chain is Peptidyl-tRNA hydrolase, found in Burkholderia ambifaria (strain MC40-6).